The following is a 388-amino-acid chain: Chorismate synthase (388 aa).

The NADP(+) site is built by R39 and R45. Residues 130–132 (RSS), 251–252 (NA), A296, 311–315 (KPIPT), and R337 contribute to the FMN site.

It belongs to the chorismate synthase family. As to quaternary structure, homotetramer. FMNH2 is required as a cofactor.

The enzyme catalyses 5-O-(1-carboxyvinyl)-3-phosphoshikimate = chorismate + phosphate. The protein operates within metabolic intermediate biosynthesis; chorismate biosynthesis; chorismate from D-erythrose 4-phosphate and phosphoenolpyruvate: step 7/7. Its function is as follows. Catalyzes the anti-1,4-elimination of the C-3 phosphate and the C-6 proR hydrogen from 5-enolpyruvylshikimate-3-phosphate (EPSP) to yield chorismate, which is the branch point compound that serves as the starting substrate for the three terminal pathways of aromatic amino acid biosynthesis. This reaction introduces a second double bond into the aromatic ring system. This chain is Chorismate synthase, found in Streptococcus equi subsp. zooepidemicus (strain H70).